We begin with the raw amino-acid sequence, 225 residues long: Ribose-5-phosphate isomerase A (225 aa).

Substrate contacts are provided by residues 26–29 (TGST), 82–85 (DGAD), and 95–98 (KGGG). The Proton acceptor role is filled by E104. K122 serves as a coordination point for substrate.

This sequence belongs to the ribose 5-phosphate isomerase family. Homodimer.

It catalyses the reaction aldehydo-D-ribose 5-phosphate = D-ribulose 5-phosphate. The protein operates within carbohydrate degradation; pentose phosphate pathway; D-ribose 5-phosphate from D-ribulose 5-phosphate (non-oxidative stage): step 1/1. Catalyzes the reversible conversion of ribose-5-phosphate to ribulose 5-phosphate. The protein is Ribose-5-phosphate isomerase A of Streptococcus gordonii (strain Challis / ATCC 35105 / BCRC 15272 / CH1 / DL1 / V288).